The chain runs to 207 residues: Ribosomal RNA small subunit methyltransferase G (207 aa).

S-adenosyl-L-methionine-binding positions include G73, L78, 124 to 125 (VE), and R139.

The protein belongs to the methyltransferase superfamily. RNA methyltransferase RsmG family.

Its subcellular location is the cytoplasm. The catalysed reaction is guanosine(527) in 16S rRNA + S-adenosyl-L-methionine = N(7)-methylguanosine(527) in 16S rRNA + S-adenosyl-L-homocysteine. In terms of biological role, specifically methylates the N7 position of guanine in position 527 of 16S rRNA. The protein is Ribosomal RNA small subunit methyltransferase G of Salmonella schwarzengrund (strain CVM19633).